The sequence spans 606 residues: Atypical protein kinase C (606 aa).

Positions serine 30–asparagine 113 constitute a PB1 domain. Residues glycine 145–cysteine 195 form a Phorbol-ester/DAG-type zinc finger. Residues phenylalanine 264 to phenylalanine 532 enclose the Protein kinase domain. Residues isoleucine 270–valine 278 and lysine 293 contribute to the ATP site. Aspartate 388 (proton acceptor) is an active-site residue. In terms of domain architecture, AGC-kinase C-terminal spans lysine 533 to aspartate 604.

Belongs to the protein kinase superfamily. AGC Ser/Thr protein kinase family. PKC subfamily. In terms of assembly, interacts with baz; the interaction is required for apical localization of aPKC in neuroblasts and epithelial cells. Interacts with Dap160; the interaction promotes aPKC apical localization and kinase activity. Interacts with and phosphorylates l(2)gl and yrt. Interacts with crb and ref(2)P. Forms a complex with baz, fz and Patj. As to expression, expressed in the testis. In spermatid cysts, localizes near the tips of spermatid flagellar axonemes (at protein level). Detectable in freshly laid eggs before onset of zygotic transcription so is deposited in the egg during oogenesis. At the cellular blastoderm stage, present in all cells except the pole cells. During gastrulation, strongly expressed in tissues undergoing morphogenetic movements such as invaginating mesoderm, proctodeum and cephalic furrow. Strongly expressed in neuroblasts.

It localises to the cytoplasm. It is found in the cell cortex. Its subcellular location is the apicolateral cell membrane. The catalysed reaction is L-seryl-[protein] + ATP = O-phospho-L-seryl-[protein] + ADP + H(+). It catalyses the reaction L-threonyl-[protein] + ATP = O-phospho-L-threonyl-[protein] + ADP + H(+). Functionally, serine/threonine protein kinase which is required for apico-basal cell polarity in the germ line as well as in epithelial and neural precursor cells, for epithelial planar cell polarity and for cell proliferation. During oocyte development, required for the posterior translocation of oocyte specification factors and for the posterior establishment of the microtubule organizing center within the presumptive oocyte. Phosphorylates l(2)gl which restricts l(2)gl activity to the oocyte posterior and regulates posterior enrichment of par-1, leading to establishment of correct oocyte polarity. Essential for apical localization of l(2)gl and par-6 in neuroblasts and for exclusion of mira from the apical cortex. Phosphorylates baz which is required for targeting of baz to the postsynaptic region where it is involved in actin organization, and for apical exclusion of baz which is necessary for establishment of the apical/lateral border in epithelial cells. Phosphorylates yrt which prevents its premature apical localization and is necessary for correct epithelial cell polarization. Required for the establishment of mitotic spindle orientation during symmetric division of epithelial cells and for apical exclusion of raps/Pins. Involved in symmetric adherens junction positioning during embryogenesis. Required for polarization of the spermatid cyst which is necessary for sperm differentiation. Required for stimulation of the Toll signaling pathway which activates Dif and dl and plays a role in innate immunity. Plays a role in memory enhancement. This Drosophila melanogaster (Fruit fly) protein is Atypical protein kinase C.